We begin with the raw amino-acid sequence, 349 residues long: Hydroxymethylglutaryl-CoA synthase (349 aa).

(3S)-3-hydroxy-3-methylglutaryl-CoA is bound at residue D30. The active-site Proton donor/acceptor is E82. C114 provides a ligand contact to (3S)-3-hydroxy-3-methylglutaryl-CoA. The Acyl-thioester intermediate role is filled by C114. Residue R203 participates in CoA binding. The (3S)-3-hydroxy-3-methylglutaryl-CoA site is built by T205 and H238. H238 serves as the catalytic Proton donor/acceptor. K243 contacts CoA. (3S)-3-hydroxy-3-methylglutaryl-CoA contacts are provided by K247, N270, and S300.

Belongs to the thiolase-like superfamily. Archaeal HMG-CoA synthase family. Interacts with acetoacetyl-CoA thiolase that catalyzes the precedent step in the pathway and with a DUF35 protein. The acetoacetyl-CoA thiolase/HMG-CoA synthase complex channels the intermediate via a fused CoA-binding site, which allows for efficient coupling of the endergonic thiolase reaction with the exergonic HMGCS reaction.

The enzyme catalyses acetoacetyl-CoA + acetyl-CoA + H2O = (3S)-3-hydroxy-3-methylglutaryl-CoA + CoA + H(+). Its pathway is metabolic intermediate biosynthesis; (R)-mevalonate biosynthesis; (R)-mevalonate from acetyl-CoA: step 2/3. Catalyzes the condensation of acetyl-CoA with acetoacetyl-CoA to form 3-hydroxy-3-methylglutaryl-CoA (HMG-CoA). Functions in the mevalonate (MVA) pathway leading to isopentenyl diphosphate (IPP), a key precursor for the biosynthesis of isoprenoid compounds that are building blocks of archaeal membrane lipids. This Methanothermococcus thermolithotrophicus (Methanococcus thermolithotrophicus) protein is Hydroxymethylglutaryl-CoA synthase.